The chain runs to 237 residues: Phosphoribosylaminoimidazole-succinocarboxamide synthase (237 aa).

It belongs to the SAICAR synthetase family.

It catalyses the reaction 5-amino-1-(5-phospho-D-ribosyl)imidazole-4-carboxylate + L-aspartate + ATP = (2S)-2-[5-amino-1-(5-phospho-beta-D-ribosyl)imidazole-4-carboxamido]succinate + ADP + phosphate + 2 H(+). It participates in purine metabolism; IMP biosynthesis via de novo pathway; 5-amino-1-(5-phospho-D-ribosyl)imidazole-4-carboxamide from 5-amino-1-(5-phospho-D-ribosyl)imidazole-4-carboxylate: step 1/2. The protein is Phosphoribosylaminoimidazole-succinocarboxamide synthase of Sodalis glossinidius (strain morsitans).